The chain runs to 249 residues: Chromosome segregation and cytokinesis defective protein 1 (249 aa).

Residues 12 to 48 are a coiled coil; that stretch reads VVAMADTLETRVKDLLEEYKKKLREVALQTAKAESDR. Disordered stretches follow at residues 70-89, 94-183, and 208-249; these read PDDF…AAVA, LPSE…PEKP, and TTAT…GTSV. Positions 73 to 85 are enriched in acidic residues; the sequence is FYIESGEEEEEGE. Polar residues predominate over residues 109–126; the sequence is QKTSIPIGQNSGRNTVQV. The segment covering 224-236 has biased composition (low complexity); sequence SGAASKKAAAAAG.

It belongs to the borealin family. Highly divergent. As to quaternary structure, component of the CPC complex which consists of icp-1; csc-1; bir-1 and air-2. Within the complex interacts with Aurora B/air-2, bir-1 and icp-1.

Its subcellular location is the nucleus. It is found in the chromosome. It localises to the centromere. The protein resides in the cytoplasm. The protein localises to the cytoskeleton. Its subcellular location is the spindle. Its function is as follows. Component of the chromosomal passenger complex (CPC), a complex that acts as a key regulator of chromosome segregation and cytokinesis during mitosis. The CPC complex has essential functions at the centromere in ensuring correct chromosome alignment and segregation. In the complex, it may be required to direct the Aurora B/air-2 to centromeric DNA. The protein is Chromosome segregation and cytokinesis defective protein 1 (csc-1) of Caenorhabditis elegans.